The sequence spans 278 residues: tRNA uridine(34) hydroxylase (278 aa).

Residues 122 to 216 (QDPDVVVIDT…YLETIAPEES (95 aa)) form the Rhodanese domain. Catalysis depends on C176, which acts as the Cysteine persulfide intermediate.

This sequence belongs to the TrhO family.

The catalysed reaction is uridine(34) in tRNA + AH2 + O2 = 5-hydroxyuridine(34) in tRNA + A + H2O. Functionally, catalyzes oxygen-dependent 5-hydroxyuridine (ho5U) modification at position 34 in tRNAs. The chain is tRNA uridine(34) hydroxylase from Synechocystis sp. (strain ATCC 27184 / PCC 6803 / Kazusa).